A 35-amino-acid polypeptide reads, in one-letter code: MSDIN-like toxin proprotein 1 (35 aa).

The propeptide occupies 1–10; that stretch reads MSDINATRLP. A cross-link (cyclopeptide (Ile-Pro)) is located at residues 11–20; sequence IIIVLGLIIP. The propeptide occupies 21 to 35; the sequence is LCVSDIEMILTRGER.

This sequence belongs to the MSDIN fungal toxin family. Processed by the macrocyclase-peptidase enzyme POPB to yield a toxic cyclic decapeptide. POPB first removes 10 residues from the N-terminus. Conformational trapping of the remaining peptide forces the enzyme to release this intermediate rather than proceed to macrocyclization. The enzyme rebinds the remaining peptide in a different conformation and catalyzes macrocyclization of the N-terminal 10 residues.

Probable toxin that belongs to the MSDIN-like toxin family responsible for a large number of food poisoning cases and deaths. The chain is MSDIN-like toxin proprotein 1 from Amanita rimosa.